The chain runs to 252 residues: 3-dehydroquinate dehydratase (252 aa).

Residues Ser-21, 46–48 (EWR), and Arg-82 each bind 3-dehydroquinate. His-143 acts as the Proton donor/acceptor in catalysis. Lys-170 functions as the Schiff-base intermediate with substrate in the catalytic mechanism. 3-dehydroquinate contacts are provided by Arg-213, Ser-232, and Gln-236.

The protein belongs to the type-I 3-dehydroquinase family. In terms of assembly, homodimer.

It catalyses the reaction 3-dehydroquinate = 3-dehydroshikimate + H2O. It functions in the pathway metabolic intermediate biosynthesis; chorismate biosynthesis; chorismate from D-erythrose 4-phosphate and phosphoenolpyruvate: step 3/7. Involved in the third step of the chorismate pathway, which leads to the biosynthesis of aromatic amino acids. Catalyzes the cis-dehydration of 3-dehydroquinate (DHQ) and introduces the first double bond of the aromatic ring to yield 3-dehydroshikimate. The polypeptide is 3-dehydroquinate dehydratase (Escherichia coli (strain K12 / MC4100 / BW2952)).